A 218-amino-acid polypeptide reads, in one-letter code: GTP cyclohydrolase 1 (218 aa).

Zn(2+) is bound by residues Cys109, His112, and Cys180.

Belongs to the GTP cyclohydrolase I family. Toroid-shaped homodecamer, composed of two pentamers of five dimers.

The enzyme catalyses GTP + H2O = 7,8-dihydroneopterin 3'-triphosphate + formate + H(+). It functions in the pathway cofactor biosynthesis; 7,8-dihydroneopterin triphosphate biosynthesis; 7,8-dihydroneopterin triphosphate from GTP: step 1/1. This is GTP cyclohydrolase 1 from Mannheimia succiniciproducens (strain KCTC 0769BP / MBEL55E).